The following is a 620-amino-acid chain: uncharacterized protein (620 aa).

2 stretches are compositionally biased toward low complexity: residues 278–290 and 301–319; these read RPPSGSGEAAGEP and ASTASATAATSTRGPTRPT. Positions 278 to 620 are disordered; sequence RPPSGSGEAA…KSQPPAAHTA (343 aa). Positions 336-411 are enriched in basic and acidic residues; the sequence is ARPESEEQTD…QESQVARRDE (76 aa). Pro residues-rich tracts occupy residues 446 to 470 and 481 to 500; these read VPGPDPRLWVPPPHLLFPSPLPPMT and RCPPGPAEEPPTCRPRPPRP. 2 stretches are compositionally biased toward low complexity: residues 501-512 and 522-541; these read SSDTPLSAVSRP and TARVRFFLSSSSSSPSYSPA. Residues 542 to 551 are compositionally biased toward pro residues; that stretch reads PLSPPSPVSP. A compositionally biased stretch (low complexity) spans 597-607; it reads SVPSSASPSAS.

Belongs to the herpesviridae US22 family.

This is an uncharacterized protein from Homo sapiens (Human).